The primary structure comprises 39 residues: uncharacterized protein (39 aa).

This is an uncharacterized protein from Bacillus subtilis (strain 168).